The chain runs to 229 residues: Uracil-DNA glycosylase (229 aa).

The active-site Proton acceptor is the Asp-64.

It belongs to the uracil-DNA glycosylase (UDG) superfamily. UNG family.

It is found in the cytoplasm. The catalysed reaction is Hydrolyzes single-stranded DNA or mismatched double-stranded DNA and polynucleotides, releasing free uracil.. Its function is as follows. Excises uracil residues from the DNA which can arise as a result of misincorporation of dUMP residues by DNA polymerase or due to deamination of cytosine. The sequence is that of Uracil-DNA glycosylase from Klebsiella pneumoniae (strain 342).